The sequence spans 80 residues: Exodeoxyribonuclease 7 small subunit (80 aa).

This sequence belongs to the XseB family. In terms of assembly, heterooligomer composed of large and small subunits.

Its subcellular location is the cytoplasm. The catalysed reaction is Exonucleolytic cleavage in either 5'- to 3'- or 3'- to 5'-direction to yield nucleoside 5'-phosphates.. In terms of biological role, bidirectionally degrades single-stranded DNA into large acid-insoluble oligonucleotides, which are then degraded further into small acid-soluble oligonucleotides. The polypeptide is Exodeoxyribonuclease 7 small subunit (Cronobacter sakazakii (strain ATCC BAA-894) (Enterobacter sakazakii)).